The chain runs to 407 residues: L-cysteine:1D-myo-inositol 2-amino-2-deoxy-alpha-D-glucopyranoside ligase (407 aa).

Cys43 is a Zn(2+) binding site. Residues 43–46, Thr58, and 81–83 contribute to the L-cysteinyl-5'-AMP site; these read CGIT and NAT. The 'HIGH' region signature appears at 45–55; sequence ITPYDATHLGH. The 'ERGGDP' region motif lies at 183–188; the sequence is QRGGDP. Trp223 lines the L-cysteinyl-5'-AMP pocket. Cys227 contributes to the Zn(2+) binding site. An L-cysteinyl-5'-AMP-binding site is contributed by 245-247; sequence GSD. His252 provides a ligand contact to Zn(2+). Val279 contributes to the L-cysteinyl-5'-AMP binding site. The 'KMSKS' region signature appears at 285-289; sequence KMSKS.

The protein belongs to the class-I aminoacyl-tRNA synthetase family. MshC subfamily. Monomer. Requires Zn(2+) as cofactor.

It catalyses the reaction 1D-myo-inositol 2-amino-2-deoxy-alpha-D-glucopyranoside + L-cysteine + ATP = 1D-myo-inositol 2-(L-cysteinylamino)-2-deoxy-alpha-D-glucopyranoside + AMP + diphosphate + H(+). Functionally, catalyzes the ATP-dependent condensation of GlcN-Ins and L-cysteine to form L-Cys-GlcN-Ins. The sequence is that of L-cysteine:1D-myo-inositol 2-amino-2-deoxy-alpha-D-glucopyranoside ligase from Streptosporangium roseum (strain ATCC 12428 / DSM 43021 / JCM 3005 / KCTC 9067 / NCIMB 10171 / NRRL 2505 / NI 9100).